The sequence spans 391 residues: MASIEEIRQAPRADGPATILAIGTATPPNAIYQADYPDYYFRVTKSEHMTELKEKFRRMCDKSMIKKRYMYLTEEILKENPNLCEYMGSSLDTRQDMVVSEVPRLGKEAAVKAIKEWGQPKSKITHVIMCTTSGVDMPGADYQLTKLLGLRPSVRRFMLYQQGCFAGGTVLRLAKDLAENNKDARVLVVCSEITAICFRGPTEAALDSMVGQALFGDGAGALIVGSDPDLSIERPLFQMAWAGQTLLPDSDGAIDGHLREVGLTFHLLKDVPGIISKNITNALEDAFSPIGVSDWNNLFWIAHPGGPAILDQVEAKLGLKEEKLAATRNVLSDFGNMSSACVLFILDEMRKKSLRDGATTTGEGLDWGVLFGFGPSLTVETVVLHSVPLNC.

The active site involves Cys-164.

This sequence belongs to the thiolase-like superfamily. Chalcone/stilbene synthases family.

The catalysed reaction is (E)-4-coumaroyl-CoA + 3 malonyl-CoA + 3 H(+) = 2',4,4',6'-tetrahydroxychalcone + 3 CO2 + 4 CoA. It participates in secondary metabolite biosynthesis; flavonoid biosynthesis. In terms of biological role, the primary product of this enzyme is 4,2',4',6'-tetrahydroxychalcone (also termed naringenin-chalcone or chalcone) which can under specific conditions spontaneously isomerize into naringenin. This chain is Chalcone synthase (CHS), found in Dianthus caryophyllus (Carnation).